Here is a 536-residue protein sequence, read N- to C-terminus: CTP synthase (536 aa).

Positions 1–268 (MSTKYVFVTG…DNLVCEKLHL (268 aa)) are amidoligase domain. CTP is bound at residue Ser-14. Ser-14 serves as a coordination point for UTP. 15 to 20 (ALGKGI) contacts ATP. Tyr-55 lines the L-glutamine pocket. An ATP-binding site is contributed by Asp-72. Residues Asp-72 and Glu-142 each coordinate Mg(2+). CTP-binding positions include 149 to 151 (DIE), 189 to 194 (KTKPTQ), and Lys-225. UTP is bound by residues 189 to 194 (KTKPTQ) and Lys-225. The 243-residue stretch at 293-535 (KIALVGKYVE…IKAALEENKS (243 aa)) folds into the Glutamine amidotransferase type-1 domain. Gly-355 is a binding site for L-glutamine. The Nucleophile; for glutamine hydrolysis role is filled by Cys-382. L-glutamine contacts are provided by residues 383–386 (LGMQ), Glu-406, and Arg-463. Active-site residues include His-508 and Glu-510.

It belongs to the CTP synthase family. As to quaternary structure, homotetramer.

It carries out the reaction UTP + L-glutamine + ATP + H2O = CTP + L-glutamate + ADP + phosphate + 2 H(+). The catalysed reaction is L-glutamine + H2O = L-glutamate + NH4(+). It catalyses the reaction UTP + NH4(+) + ATP = CTP + ADP + phosphate + 2 H(+). It functions in the pathway pyrimidine metabolism; CTP biosynthesis via de novo pathway; CTP from UDP: step 2/2. Its activity is regulated as follows. Allosterically activated by GTP, when glutamine is the substrate; GTP has no effect on the reaction when ammonia is the substrate. The allosteric effector GTP functions by stabilizing the protein conformation that binds the tetrahedral intermediate(s) formed during glutamine hydrolysis. Inhibited by the product CTP, via allosteric rather than competitive inhibition. Its function is as follows. Catalyzes the ATP-dependent amination of UTP to CTP with either L-glutamine or ammonia as the source of nitrogen. Regulates intracellular CTP levels through interactions with the four ribonucleotide triphosphates. In Clostridium beijerinckii (strain ATCC 51743 / NCIMB 8052) (Clostridium acetobutylicum), this protein is CTP synthase.